An 81-amino-acid chain; its full sequence is Antimicrobial peptide Con22 (81 aa).

An N-terminal signal peptide occupies residues 1 to 22 (MNAKVMLVCLLVTMLVMEPAEA). Residues 66–81 (EAGQIPFDEFMNVLYS) constitute a propeptide that is removed on maturation.

This sequence belongs to the non-disulfide-bridged peptide (NDBP) superfamily. Long chain multifunctional peptide (group 2) family. In terms of tissue distribution, expressed by the venom gland.

It is found in the secreted. Its subcellular location is the target cell membrane. In terms of biological role, at high concentrations, acts as a pore former in cellular membranes and causes the leakage of the cells. At submicromolar concentrations, degranulates granulocytes and has a weak hemolytic activity against human erythrocytes. Also strongly inhibits the production of superoxide anions. Has a strong antibacterial activity against Gram-negative bacteria but is less active against Gram-positive bacteria. Also has antifungal activity. This is Antimicrobial peptide Con22 from Urodacus yaschenkoi (Inland robust scorpion).